A 561-amino-acid polypeptide reads, in one-letter code: Urocanate hydratase (561 aa).

Residues 52–53, Gln130, 176–178, Glu196, Arg201, 242–243, 263–267, 273–274, and Tyr322 each bind NAD(+); these read GG, GMG, NA, QTSAH, and YL. Cys410 is an active-site residue. Gly492 is a binding site for NAD(+).

The protein belongs to the urocanase family. NAD(+) is required as a cofactor.

It localises to the cytoplasm. The enzyme catalyses 4-imidazolone-5-propanoate = trans-urocanate + H2O. Its pathway is amino-acid degradation; L-histidine degradation into L-glutamate; N-formimidoyl-L-glutamate from L-histidine: step 2/3. Its function is as follows. Catalyzes the conversion of urocanate to 4-imidazolone-5-propionate. The protein is Urocanate hydratase of Salmonella gallinarum (strain 287/91 / NCTC 13346).